The chain runs to 309 residues: Formimidoylglutamase (309 aa).

Mn(2+)-binding residues include His128, Asp153, His155, Asp157, Cys240, and Asp242.

Belongs to the arginase family. Mn(2+) serves as cofactor.

The catalysed reaction is N-formimidoyl-L-glutamate + H2O = formamide + L-glutamate. It participates in amino-acid degradation; L-histidine degradation into L-glutamate; L-glutamate from N-formimidoyl-L-glutamate (hydrolase route): step 1/1. Catalyzes the conversion of N-formimidoyl-L-glutamate to L-glutamate and formamide. The chain is Formimidoylglutamase from Staphylococcus carnosus (strain TM300).